Reading from the N-terminus, the 352-residue chain is Phenylalanine--tRNA ligase alpha subunit (352 aa).

Glutamate 258 contacts Mg(2+).

It belongs to the class-II aminoacyl-tRNA synthetase family. Phe-tRNA synthetase alpha subunit type 1 subfamily. As to quaternary structure, tetramer of two alpha and two beta subunits. Mg(2+) is required as a cofactor.

It is found in the cytoplasm. It carries out the reaction tRNA(Phe) + L-phenylalanine + ATP = L-phenylalanyl-tRNA(Phe) + AMP + diphosphate + H(+). This is Phenylalanine--tRNA ligase alpha subunit from Staphylococcus aureus (strain NCTC 8325 / PS 47).